The chain runs to 313 residues: Malate dehydrogenase (313 aa).

NAD(+)-binding positions include 8 to 13 (GAGNVG) and D33. Residues R83 and R89 each coordinate substrate. NAD(+) is bound by residues N96 and 119–121 (ISN). Substrate contacts are provided by N121 and R152. The active-site Proton acceptor is H176.

It belongs to the LDH/MDH superfamily. MDH type 3 family.

The enzyme catalyses (S)-malate + NAD(+) = oxaloacetate + NADH + H(+). In terms of biological role, catalyzes the reversible oxidation of malate to oxaloacetate. This chain is Malate dehydrogenase, found in Bacteroides thetaiotaomicron (strain ATCC 29148 / DSM 2079 / JCM 5827 / CCUG 10774 / NCTC 10582 / VPI-5482 / E50).